The chain runs to 504 residues: Maturase K (504 aa).

This sequence belongs to the intron maturase 2 family. MatK subfamily.

The protein resides in the plastid. It localises to the chloroplast. Functionally, usually encoded in the trnK tRNA gene intron. Probably assists in splicing its own and other chloroplast group II introns. The sequence is that of Maturase K from Lupinus argenteus (Silvery lupine).